Here is an 84-residue protein sequence, read N- to C-terminus: Small ribosomal subunit protein bS18 (84 aa).

This sequence belongs to the bacterial ribosomal protein bS18 family. Part of the 30S ribosomal subunit. Forms a tight heterodimer with protein bS6.

Its function is as follows. Binds as a heterodimer with protein bS6 to the central domain of the 16S rRNA, where it helps stabilize the platform of the 30S subunit. The chain is Small ribosomal subunit protein bS18 from Polynucleobacter necessarius subsp. necessarius (strain STIR1).